Consider the following 369-residue polypeptide: S-adenosylmethionine:tRNA ribosyltransferase-isomerase (369 aa).

It belongs to the QueA family. Monomer.

It is found in the cytoplasm. It carries out the reaction 7-aminomethyl-7-carbaguanosine(34) in tRNA + S-adenosyl-L-methionine = epoxyqueuosine(34) in tRNA + adenine + L-methionine + 2 H(+). It functions in the pathway tRNA modification; tRNA-queuosine biosynthesis. Transfers and isomerizes the ribose moiety from AdoMet to the 7-aminomethyl group of 7-deazaguanine (preQ1-tRNA) to give epoxyqueuosine (oQ-tRNA). This is S-adenosylmethionine:tRNA ribosyltransferase-isomerase from Synechococcus sp. (strain CC9311).